The following is a 174-amino-acid chain: Ribosome maturation factor RimM (174 aa).

The PRC barrel domain occupies 97-173 (GNKFYFHEVI…DLPVGLVEMY (77 aa)).

The protein belongs to the RimM family. Binds ribosomal protein uS19.

Its subcellular location is the cytoplasm. Its function is as follows. An accessory protein needed during the final step in the assembly of 30S ribosomal subunit, possibly for assembly of the head region. Essential for efficient processing of 16S rRNA. May be needed both before and after RbfA during the maturation of 16S rRNA. It has affinity for free ribosomal 30S subunits but not for 70S ribosomes. In Flavobacterium johnsoniae (strain ATCC 17061 / DSM 2064 / JCM 8514 / BCRC 14874 / CCUG 350202 / NBRC 14942 / NCIMB 11054 / UW101) (Cytophaga johnsonae), this protein is Ribosome maturation factor RimM.